The following is a 391-amino-acid chain: Elongation factor Tu (391 aa).

Positions 10-201 (KPHVNIGTIG…EVDKYIPTPE (192 aa)) constitute a tr-type G domain. The G1 stretch occupies residues 19–26 (GHVDHGKT). 19–26 (GHVDHGKT) contacts GTP. Residue Thr-26 coordinates Mg(2+). Residues 55–59 (GITIS) are G2. Positions 76–79 (DCPG) are G3. Residues 76–80 (DCPGH) and 131–134 (NKVD) contribute to the GTP site. Positions 131–134 (NKVD) are G4. A G5 region spans residues 169–171 (SAL).

The protein belongs to the TRAFAC class translation factor GTPase superfamily. Classic translation factor GTPase family. EF-Tu/EF-1A subfamily. In terms of assembly, monomer.

The protein resides in the cytoplasm. The enzyme catalyses GTP + H2O = GDP + phosphate + H(+). Its function is as follows. GTP hydrolase that promotes the GTP-dependent binding of aminoacyl-tRNA to the A-site of ribosomes during protein biosynthesis. The chain is Elongation factor Tu from Chelativorans sp. (strain BNC1).